The primary structure comprises 186 residues: Peptidyl-tRNA hydrolase (186 aa).

A tRNA-binding site is contributed by Tyr15. His20 (proton acceptor) is an active-site residue. Positions 64, 66, and 112 each coordinate tRNA.

Belongs to the PTH family. Monomer.

The protein localises to the cytoplasm. The enzyme catalyses an N-acyl-L-alpha-aminoacyl-tRNA + H2O = an N-acyl-L-amino acid + a tRNA + H(+). Its function is as follows. Hydrolyzes ribosome-free peptidyl-tRNAs (with 1 or more amino acids incorporated), which drop off the ribosome during protein synthesis, or as a result of ribosome stalling. Functionally, catalyzes the release of premature peptidyl moieties from peptidyl-tRNA molecules trapped in stalled 50S ribosomal subunits, and thus maintains levels of free tRNAs and 50S ribosomes. The sequence is that of Peptidyl-tRNA hydrolase from Azobacteroides pseudotrichonymphae genomovar. CFP2.